A 239-amino-acid polypeptide reads, in one-letter code: MSVLAETIKEGAREMGIVITEKQVRQFEEYYSLIIERNKSLNLTAITGEREVAVKHFLDSLTCLKAVPLEDGTSLMDVGTGAGFPGIPLKICRPSVRVKLVESAEKKAVFLREAIGRLGLEMAEAIWARAEDVGKDPDHREKYGCVVARAVAELAVLAEYCLPAAGVGGCFLAMKGPKAEEEAVRAKDAIKILGGRLEEIINLKLPFTGDRRSLVVIRKIGETPEKYPRRPGVPQKRPL.

S-adenosyl-L-methionine contacts are provided by residues Gly79, Phe84, 130–131 (AE), and Arg149.

Belongs to the methyltransferase superfamily. RNA methyltransferase RsmG family.

It is found in the cytoplasm. Specifically methylates the N7 position of a guanine in 16S rRNA. This Pelotomaculum thermopropionicum (strain DSM 13744 / JCM 10971 / SI) protein is Ribosomal RNA small subunit methyltransferase G.